The following is a 263-amino-acid chain: UPF0739 protein C1orf74 homolog (263 aa).

Belongs to the UPF0739 family.

The sequence is that of UPF0739 protein C1orf74 homolog from Mus musculus (Mouse).